Consider the following 170-residue polypeptide: Lipoprotein signal peptidase (170 aa).

Helical transmembrane passes span 12–32 (WYWVVVLVFLADQLSKQWVLA), 67–87 (WQRWLFTLVAVGFSTLLTVWL), and 93–113 (SLWKLNLAYTLVIGGALGNLI). Active-site residues include Asp123 and Asp141. Residues 137–157 (FNIADSAIFIGAVLIIWDSFF) traverse the membrane as a helical segment.

This sequence belongs to the peptidase A8 family.

It localises to the cell inner membrane. The enzyme catalyses Release of signal peptides from bacterial membrane prolipoproteins. Hydrolyzes -Xaa-Yaa-Zaa-|-(S,diacylglyceryl)Cys-, in which Xaa is hydrophobic (preferably Leu), and Yaa (Ala or Ser) and Zaa (Gly or Ala) have small, neutral side chains.. It participates in protein modification; lipoprotein biosynthesis (signal peptide cleavage). Its function is as follows. This protein specifically catalyzes the removal of signal peptides from prolipoproteins. This is Lipoprotein signal peptidase from Shewanella sp. (strain MR-4).